Reading from the N-terminus, the 117-residue chain is DNA-directed RNA polymerase subunit omega (117 aa).

It belongs to the RNA polymerase subunit omega family. As to quaternary structure, the RNAP catalytic core consists of 2 alpha, 1 beta, 1 beta' and 1 omega subunit. When a sigma factor is associated with the core the holoenzyme is formed, which can initiate transcription.

It catalyses the reaction RNA(n) + a ribonucleoside 5'-triphosphate = RNA(n+1) + diphosphate. Its function is as follows. Promotes RNA polymerase assembly. Latches the N- and C-terminal regions of the beta' subunit thereby facilitating its interaction with the beta and alpha subunits. This chain is DNA-directed RNA polymerase subunit omega, found in Cereibacter sphaeroides (strain ATCC 17025 / ATH 2.4.3) (Rhodobacter sphaeroides).